The primary structure comprises 338 residues: DNA-directed RNA polymerase I subunit RPA43 (338 aa).

Positions 209–338 (EVSEEVTENG…PKRKGKSNFL (130 aa)) are disordered. Phosphoserine occurs at positions 242, 304, and 316. A Phosphothreonine modification is found at threonine 322. Serine 328 carries the post-translational modification Phosphoserine. The span at 328-338 (SPKRKGKSNFL) shows a compositional bias: basic residues.

The protein belongs to the eukaryotic RPA43 RNA polymerase subunit family. In terms of assembly, component of the RNA polymerase I (Pol I) complex consisting of 13 subunits: a ten-subunit catalytic core composed of POLR1A/RPA1, POLR1B/RPA2, POLR1C/RPAC1, POLR1D/RPAC2, POLR1H/RPA12, POLR2E/RPABC1, POLR2F/RPABC2, POLR2H/RPABC3, POLR2K/RPABC4 and POLR2L/RPABC5; a mobile stalk subunit POLR1F/RPA43 protruding from the core and additional subunits homologous to general transcription factors POLR1E/RPA49 and POLR1G/RPA34. Interacts with RRN3/TIF-IA. As to expression, widely expressed. Expressed in all fetal and adult tissues tested, with highest expression in fetal lung, liver, and kidney, and low expression in all adult tissues.

The protein resides in the nucleus. Its subcellular location is the nucleolus. Functionally, component of RNA polymerase I (Pol I), a DNA-dependent RNA polymerase which synthesizes ribosomal RNA precursors using the four ribonucleoside triphosphates as substrates. Through its association with RRN3/TIF-IA may be involved in recruitment of Pol I to rDNA promoters. The protein is DNA-directed RNA polymerase I subunit RPA43 of Homo sapiens (Human).